A 1381-amino-acid chain; its full sequence is Peroxisomal ATPase PEX6 (1381 aa).

Polar residues predominate over residues 1-10; that stretch reads MTAPNSTPAS. Disordered regions lie at residues 1–23, 247–315, 333–374, and 467–499; these read MTAP…QDKP, VRTS…DNLS, TVTG…DRPR, and YSSR…NPPA. Residues 11–20 are compositionally biased toward basic residues; the sequence is SRKRVRRRRQ. 2 stretches are compositionally biased toward acidic residues: residues 270–284 and 296–315; these read AEDD…AEED and TDAD…DNLS. Polar residues-rich tracts occupy residues 333–345, 355–367, and 487–499; these read TVTG…TGTP, GPGS…TATT, and FFEA…NPPA. 1031–1038 is a binding site for ATP; the sequence is GPPGTGKT. Basic and acidic residues-rich tracts occupy residues 1294-1305 and 1337-1350; these read GAKDKDKKKEGA and STKK…KAAD. Positions 1294–1381 are disordered; it reads GAKDKDKKKE…GGDEDEGLYD (88 aa). The span at 1372–1381 shows a compositional bias: acidic residues; the sequence is GGDEDEGLYD.

Belongs to the AAA ATPase family. As to quaternary structure, interacts with PEX1; forming the PEX1-PEX6 AAA ATPase complex, which is composed of a heterohexamer formed by a trimer of PEX1-PEX6 dimers.

The protein localises to the cytoplasm. The protein resides in the cytosol. It is found in the peroxisome membrane. It carries out the reaction ATP + H2O = ADP + phosphate + H(+). Functionally, component of the PEX1-PEX6 AAA ATPase complex, a protein dislocase complex that mediates the ATP-dependent extraction of the PEX5 receptor from peroxisomal membranes, an essential step for PEX5 recycling. Specifically recognizes PEX5 monoubiquitinated at 'Cys-6', and pulls it out of the peroxisome lumen through the PEX2-PEX10-PEX12 retrotranslocation channel. Extraction by the PEX1-PEX6 AAA ATPase complex is accompanied by unfolding of the TPR repeats and release of bound cargo from PEX5. The polypeptide is Peroxisomal ATPase PEX6 (pex-6) (Neurospora crassa (strain ATCC 24698 / 74-OR23-1A / CBS 708.71 / DSM 1257 / FGSC 987)).